Reading from the N-terminus, the 256-residue chain is Low molecular mass lipoprotein 3 (256 aa).

An N-terminal signal peptide occupies residues methionine 1–alanine 17.

This sequence belongs to the 30 kDa lipoprotein family. In terms of tissue distribution, detected in larval hemolymph (at protein level).

The protein resides in the secreted. This chain is Low molecular mass lipoprotein 3, found in Bombyx mori (Silk moth).